The sequence spans 148 residues: Ribonuclease H (148 aa).

Residues 1–142 (MSDSVELYTD…ADQLANRGVD (142 aa)) form the RNase H type-1 domain. The Mg(2+) site is built by Asp-10, Glu-48, Asp-70, and Asp-134. The segment at 129–148 (GNERADQLANRGVDEVRAKR) is disordered.

The protein belongs to the RNase H family. As to quaternary structure, monomer. Mg(2+) serves as cofactor.

It is found in the cytoplasm. It catalyses the reaction Endonucleolytic cleavage to 5'-phosphomonoester.. Functionally, endonuclease that specifically degrades the RNA of RNA-DNA hybrids. This chain is Ribonuclease H, found in Pseudomonas putida (strain W619).